Consider the following 434-residue polypeptide: ATP-dependent RNA helicase SUB2 (434 aa).

Over residues 1-16 (MSGEEDLIDYSDDELN) the composition is skewed to acidic residues. A disordered region spans residues 1–32 (MSGEEDLIDYSDDELNNETTAPASNGKKGDAA). A Q motif motif is present at residues 50 to 78 (TGFRDFLLKPELLRAIADCGFEHPSEVQQ). Residues 81 to 256 (IPQAMLGGDI…RKFMQNPTEH (176 aa)) form the Helicase ATP-binding domain. 94 to 101 (AKSGLGKT) is an ATP binding site. Positions 203–206 (DECD) match the DEAD box motif. The Helicase C-terminal domain maps to 268–429 (GLQQYYIPLE…EFPKEGIDAS (162 aa)).

It belongs to the DEAD box helicase family. DECD subfamily.

The protein resides in the nucleus. The catalysed reaction is ATP + H2O = ADP + phosphate + H(+). Functionally, ATP-binding RNA helicase involved in transcription elongation and required for the export of mRNA out of the nucleus. SUB2 also plays a role in pre-mRNA splicing and spliceosome assembly. May be involved in rDNA and telomeric silencing, and maintenance of genome integrity. The polypeptide is ATP-dependent RNA helicase SUB2 (SUB2) (Chaetomium globosum (strain ATCC 6205 / CBS 148.51 / DSM 1962 / NBRC 6347 / NRRL 1970) (Soil fungus)).